A 194-amino-acid polypeptide reads, in one-letter code: tRNA (guanine-N(1)-)-methyltransferase (194 aa).

Residues G78 and 97–102 (IGDYVL) each bind S-adenosyl-L-methionine.

This sequence belongs to the RNA methyltransferase TrmD family. As to quaternary structure, homodimer.

It is found in the cytoplasm. The enzyme catalyses guanosine(37) in tRNA + S-adenosyl-L-methionine = N(1)-methylguanosine(37) in tRNA + S-adenosyl-L-homocysteine + H(+). Its function is as follows. Specifically methylates guanosine-37 in various tRNAs. In Mycoplasma mobile (strain ATCC 43663 / 163K / NCTC 11711) (Mesomycoplasma mobile), this protein is tRNA (guanine-N(1)-)-methyltransferase.